The sequence spans 551 residues: Dihydroxy-acid dehydratase (551 aa).

D78 provides a ligand contact to Mg(2+). C119 is a [2Fe-2S] cluster binding site. Residues D120 and K121 each coordinate Mg(2+). At K121 the chain carries N6-carboxylysine. Position 191 (C191) interacts with [2Fe-2S] cluster. E442 is a Mg(2+) binding site. S468 functions as the Proton acceptor in the catalytic mechanism.

The protein belongs to the IlvD/Edd family. As to quaternary structure, homodimer. Requires [2Fe-2S] cluster as cofactor. Mg(2+) serves as cofactor.

It carries out the reaction (2R)-2,3-dihydroxy-3-methylbutanoate = 3-methyl-2-oxobutanoate + H2O. The catalysed reaction is (2R,3R)-2,3-dihydroxy-3-methylpentanoate = (S)-3-methyl-2-oxopentanoate + H2O. The protein operates within amino-acid biosynthesis; L-isoleucine biosynthesis; L-isoleucine from 2-oxobutanoate: step 3/4. Its pathway is amino-acid biosynthesis; L-valine biosynthesis; L-valine from pyruvate: step 3/4. Its function is as follows. Functions in the biosynthesis of branched-chain amino acids. Catalyzes the dehydration of (2R,3R)-2,3-dihydroxy-3-methylpentanoate (2,3-dihydroxy-3-methylvalerate) into 2-oxo-3-methylpentanoate (2-oxo-3-methylvalerate) and of (2R)-2,3-dihydroxy-3-methylbutanoate (2,3-dihydroxyisovalerate) into 2-oxo-3-methylbutanoate (2-oxoisovalerate), the penultimate precursor to L-isoleucine and L-valine, respectively. This chain is Dihydroxy-acid dehydratase, found in Halothermothrix orenii (strain H 168 / OCM 544 / DSM 9562).